Here is an 845-residue protein sequence, read N- to C-terminus: Krueppel homolog 1 (845 aa).

A disordered region spans residues 141 to 164; the sequence is QKQQQQQQHESITNAAPTAAPSAQ. 8 C2H2-type zinc fingers span residues 194 to 216, 271 to 293, 299 to 321, 327 to 349, 355 to 377, 383 to 407, 413 to 435, and 441 to 463; these read FKCD…TKSH, YQCN…YRTH, FECE…RRIH, YKCD…MRIH, HKCS…MRTH, YKCP…SRTH, YHCD…RVQH, and YKCT…IKGH. Disordered regions lie at residues 469–610 and 757–845; these read DDEA…VQGQ and GLRS…AKAS. Low complexity-rich tracts occupy residues 474-491, 498-508, and 532-559; these read AAAA…SAGS, SSNSESSNHSP, and ATLS…SSMA. Polar residues predominate over residues 582-591; sequence SGVSSAQPAH. The span at 759 to 775 shows a compositional bias: low complexity; sequence RSSTESPERSSSPESDS. A compositionally biased stretch (basic and acidic residues) spans 796 to 809; the sequence is NKGDDGQVDSEKAS. Positions 810–823 are enriched in low complexity; sequence GDGTSAAGGAASVG.

Belongs to the krueppel C2H2-type zinc-finger protein family.

Functionally, plays a general role in the hierarchies of gene expression leading to metamorphosis. This is Krueppel homolog 1 (Kr-h1) from Drosophila melanogaster (Fruit fly).